A 479-amino-acid polypeptide reads, in one-letter code: 3-isopropylmalate dehydratase large subunit (479 aa).

[4Fe-4S] cluster contacts are provided by Cys-353, Cys-414, and Cys-417.

This sequence belongs to the aconitase/IPM isomerase family. LeuC type 1 subfamily. As to quaternary structure, heterodimer of LeuC and LeuD. It depends on [4Fe-4S] cluster as a cofactor.

The catalysed reaction is (2R,3S)-3-isopropylmalate = (2S)-2-isopropylmalate. Its pathway is amino-acid biosynthesis; L-leucine biosynthesis; L-leucine from 3-methyl-2-oxobutanoate: step 2/4. Catalyzes the isomerization between 2-isopropylmalate and 3-isopropylmalate, via the formation of 2-isopropylmaleate. The chain is 3-isopropylmalate dehydratase large subunit from Xanthomonas campestris pv. campestris (strain 8004).